The primary structure comprises 586 residues: Aspartate--tRNA(Asp/Asn) ligase (586 aa).

Glu175 contributes to the L-aspartate binding site. An aspartate region spans residues 199–202 (QIFK). L-aspartate is bound at residue Arg221. Residues 221-223 (RDE) and Gln230 each bind ATP. His448 provides a ligand contact to L-aspartate. Glu482 provides a ligand contact to ATP. Arg489 is a binding site for L-aspartate. 534-537 (GVDR) is an ATP binding site.

The protein belongs to the class-II aminoacyl-tRNA synthetase family. Type 1 subfamily. As to quaternary structure, homodimer.

Its subcellular location is the cytoplasm. The enzyme catalyses tRNA(Asx) + L-aspartate + ATP = L-aspartyl-tRNA(Asx) + AMP + diphosphate. Aspartyl-tRNA synthetase with relaxed tRNA specificity since it is able to aspartylate not only its cognate tRNA(Asp) but also tRNA(Asn). Reaction proceeds in two steps: L-aspartate is first activated by ATP to form Asp-AMP and then transferred to the acceptor end of tRNA(Asp/Asn). The chain is Aspartate--tRNA(Asp/Asn) ligase from Syntrophomonas wolfei subsp. wolfei (strain DSM 2245B / Goettingen).